Reading from the N-terminus, the 295-residue chain is Pyridoxal 5'-phosphate synthase subunit PdxS (295 aa).

D-ribose 5-phosphate is bound at residue Asp-25. The active-site Schiff-base intermediate with D-ribose 5-phosphate is Lys-82. Residue Gly-154 coordinates D-ribose 5-phosphate. Arg-166 is a D-glyceraldehyde 3-phosphate binding site. Residues Gly-215 and Gly-236 to Ser-237 contribute to the D-ribose 5-phosphate site.

Belongs to the PdxS/SNZ family. As to quaternary structure, in the presence of PdxT, forms a dodecamer of heterodimers.

It catalyses the reaction aldehydo-D-ribose 5-phosphate + D-glyceraldehyde 3-phosphate + L-glutamine = pyridoxal 5'-phosphate + L-glutamate + phosphate + 3 H2O + H(+). Its pathway is cofactor biosynthesis; pyridoxal 5'-phosphate biosynthesis. In terms of biological role, catalyzes the formation of pyridoxal 5'-phosphate from ribose 5-phosphate (RBP), glyceraldehyde 3-phosphate (G3P) and ammonia. The ammonia is provided by the PdxT subunit. Can also use ribulose 5-phosphate and dihydroxyacetone phosphate as substrates, resulting from enzyme-catalyzed isomerization of RBP and G3P, respectively. In Listeria monocytogenes serotype 4b (strain CLIP80459), this protein is Pyridoxal 5'-phosphate synthase subunit PdxS.